We begin with the raw amino-acid sequence, 148 residues long: MTPELNLKSLGAKTPYIFEYNSQLLEAFPNPNPNLDPLITLECKEFTSLCPITSQPDFGVIFIRYIPKDKMVESKSLKLYLFSYRNHGSFHESCINTILLDLVRLLEPKYLEVYGDFASRGGIAIKPFVNYAIKEYQGFKEKRLLNAK.

Residue Cys-50 is the Thioimide intermediate of the active site. Asp-57 functions as the Proton donor in the catalytic mechanism. Residues 72 to 74 (VES) and 91 to 92 (HE) each bind substrate.

It belongs to the GTP cyclohydrolase I family. QueF type 1 subfamily.

The protein localises to the cytoplasm. It catalyses the reaction 7-aminomethyl-7-carbaguanine + 2 NADP(+) = 7-cyano-7-deazaguanine + 2 NADPH + 3 H(+). Its pathway is tRNA modification; tRNA-queuosine biosynthesis. In terms of biological role, catalyzes the NADPH-dependent reduction of 7-cyano-7-deazaguanine (preQ0) to 7-aminomethyl-7-deazaguanine (preQ1). This chain is NADPH-dependent 7-cyano-7-deazaguanine reductase, found in Helicobacter pylori (strain P12).